The sequence spans 434 residues: CBL-interacting protein kinase 15 (434 aa).

Residues 12-267 (YELGRLLGKG…IQKIKESTWF (256 aa)) form the Protein kinase domain. Residues 18–26 (LGKGTFGKV) and K41 each bind ATP. The active-site Proton acceptor is the D135. Positions 153–182 (DFGLSALSESKRQDGLLHTTCGTPAYVAPE) are activation loop. An NAF domain is found at 298–333 (RKKNAHEDVKPMSVTNLNAFEIISFSKGFDLSGMFI). Residues 338–367 (RNEARFTSDKSASTIISKLEDVAKALNLRV) are PPI.

The protein belongs to the protein kinase superfamily. CAMK Ser/Thr protein kinase family. SNF1 subfamily. Requires Mn(2+) as cofactor.

The enzyme catalyses L-seryl-[protein] + ATP = O-phospho-L-seryl-[protein] + ADP + H(+). It catalyses the reaction L-threonyl-[protein] + ATP = O-phospho-L-threonyl-[protein] + ADP + H(+). Involved in salt stress tolerance. CIPK serine-threonine protein kinases interact with CBL proteins. Binding of a CBL protein to the regulatory NAF domain of CIPK protein lead to the activation of the kinase in a calcium-dependent manner. In Oryza sativa subsp. japonica (Rice), this protein is CBL-interacting protein kinase 15 (CIPK15).